A 381-amino-acid polypeptide reads, in one-letter code: Creatine kinase M-type (381 aa).

Positions 11 to 98 constitute a Phosphagen kinase N-terminal domain; that stretch reads KLKFSAEEEF…FDPVIQDRHG (88 aa). Positions 99 to 118 are disordered; the sequence is GYKPTDKHRTDLNHENLKGG. Residues 125–367 form the Phosphagen kinase C-terminal domain; the sequence is YVLSSRVRTG…KLMVEMEKKL (243 aa). ATP contacts are provided by residues 128–132, His191, Arg236, Arg292, 320–325, and Asp335; these read SSRVR and RGTGGV.

The protein belongs to the ATP:guanido phosphotransferase family. Dimer of identical or non-identical chains, which can be either B (brain type) or M (muscle type). With MM being the major form in skeletal muscle and myocardium, MB existing in myocardium, and BB existing in many tissues, especially brain. Predominantly found in skeletal muscle, but not in the heart.

It localises to the cytoplasm. It catalyses the reaction creatine + ATP = N-phosphocreatine + ADP + H(+). Reversibly catalyzes the transfer of phosphate between ATP and various phosphogens (e.g. creatine phosphate). Creatine kinase isoenzymes play a central role in energy transduction in tissues with large, fluctuating energy demands, such as skeletal muscle, heart, brain and spermatozoa. The polypeptide is Creatine kinase M-type (Gallus gallus (Chicken)).